Reading from the N-terminus, the 913-residue chain is Vacuolar membrane protease (913 aa).

Topologically, residues Met-1–Thr-15 are cytoplasmic. A helical membrane pass occupies residues Thr-16 to Ala-36. The Vacuolar portion of the chain corresponds to Asn-37 to Tyr-364. Asn-117 is a glycosylation site (N-linked (GlcNAc...) asparagine). Zn(2+)-binding residues include His-152 and Asp-164. Residue Glu-196 is the Proton acceptor of the active site. Residues Glu-197, Glu-222, and His-296 each contribute to the Zn(2+) site. Residues Val-365 to Cys-385 traverse the membrane as a helical segment. Over Asn-386–Pro-394 the chain is Cytoplasmic. Residues Thr-395 to Phe-415 form a helical membrane-spanning segment. Over Thr-416 to Asn-431 the chain is Vacuolar. Residues Phe-432–Ala-452 traverse the membrane as a helical segment. The Cytoplasmic segment spans residues Leu-453–Thr-465. A helical transmembrane segment spans residues Leu-466 to Leu-486. The Vacuolar segment spans residues Ser-487 to Thr-494. A helical transmembrane segment spans residues Gly-495–Cys-515. The Cytoplasmic segment spans residues Ser-516–Tyr-600. Basic and acidic residues predominate over residues Asn-540–Glu-552. The interval Asn-540 to Ser-578 is disordered. Residues Thr-557–Pro-566 are compositionally biased toward polar residues. The segment covering Ser-567 to Ser-578 has biased composition (low complexity). A helical membrane pass occupies residues Leu-601 to Ala-621. Residues Leu-622 to Glu-634 are Vacuolar-facing. The chain crosses the membrane as a helical span at residues Ala-635 to Thr-655. Over Thr-656–Arg-660 the chain is Cytoplasmic. Residues Phe-661 to Ala-681 form a helical membrane-spanning segment. The Vacuolar portion of the chain corresponds to Pro-682 to Leu-913. N-linked (GlcNAc...) asparagine glycans are attached at residues Asn-729, Asn-794, and Asn-810.

This sequence belongs to the peptidase M28 family. The cofactor is Zn(2+).

Its subcellular location is the vacuole membrane. Its function is as follows. May be involved in vacuolar sorting and osmoregulation. The sequence is that of Vacuolar membrane protease from Kluyveromyces lactis (strain ATCC 8585 / CBS 2359 / DSM 70799 / NBRC 1267 / NRRL Y-1140 / WM37) (Yeast).